A 229-amino-acid polypeptide reads, in one-letter code: 5'-methylthioadenosine/S-adenosylhomocysteine nucleosidase (229 aa).

E12 serves as the catalytic Proton acceptor. Substrate-binding positions include G78, I152, and 173–174; that span reads ME. D197 functions as the Proton donor in the catalytic mechanism.

Belongs to the PNP/UDP phosphorylase family. MtnN subfamily.

The enzyme catalyses S-adenosyl-L-homocysteine + H2O = S-(5-deoxy-D-ribos-5-yl)-L-homocysteine + adenine. It carries out the reaction S-methyl-5'-thioadenosine + H2O = 5-(methylsulfanyl)-D-ribose + adenine. The catalysed reaction is 5'-deoxyadenosine + H2O = 5-deoxy-D-ribose + adenine. It functions in the pathway amino-acid biosynthesis; L-methionine biosynthesis via salvage pathway; S-methyl-5-thio-alpha-D-ribose 1-phosphate from S-methyl-5'-thioadenosine (hydrolase route): step 1/2. Catalyzes the irreversible cleavage of the glycosidic bond in both 5'-methylthioadenosine (MTA) and S-adenosylhomocysteine (SAH/AdoHcy) to adenine and the corresponding thioribose, 5'-methylthioribose and S-ribosylhomocysteine, respectively. Also cleaves 5'-deoxyadenosine, a toxic by-product of radical S-adenosylmethionine (SAM) enzymes, into 5-deoxyribose and adenine. This is 5'-methylthioadenosine/S-adenosylhomocysteine nucleosidase from Pasteurella multocida (strain Pm70).